The primary structure comprises 860 residues: MTAIEPQNLEKHTPMMRQYLTLKAQHPDMLLFYRMGDFYELFYEDAKLASELLGISLTARGKSGGDPIPMAGLPYHAVEGYLAKLVQLRVSVAICEQIGDPATSKGPVERKVVRIVTPGTLTDEALLQERQDNLLAALYQGKSGYGYATLDIASGRFVITELANTEALEAELQRTNPAELLYSEDFSQMSLIAGMNGTRRRPEWEFDFDTCQRLLLNQFGTKDLNGFGIEGARLSLQAAGCLMQYVKDTQRTALPHINSIVRFNQTDSIVLDAATRRNLELTVNLQGGHTNTLASVLDSTVTAMGSRMLQRWLHQPLRDHQVIKARQSSIAELIATENYQLLAEDLKALGDVERITARIALRNARPRDFARLRQALGLLPQLQQTLKASSEPHLQYLSQVIGEFPEELALLSRAVVDNPPMLIRDGGVIRDGYDAELDEWRVLSAGATDYLTQLEAREKEQTGISTLKVGYNRVHGYYIEVSRRESDLVPLSYQRRQTLKNTERYIIAELKEHEEKVLSSQGKALALEKQLWEELFDLILPKLHELQEFATAAAELDVLCNFAECAETLNYACPELSDASGIHVEAGRHPVVEQVSQSPFIANPVTLNSQRKMLIVTGPNMGGKSTYMRQIALITLMAHIGCYVPAEHAVIGPVDRIFTRIGASDDLASGRSTFMVEMTETANILHNATPNSLVLMDEIGRGTSTYDGLSLAWSAAEYLANNLNAMTLFATHYFELTQLPEQIKNVENVHLDAVEHGDSIVFMHAVQEGPASRSYGLQVAALAGVPNSVICAAKQKLHHLESRDHALEQSKNGEMAVQQTISFPTQPTSPVIEALEKLNPDELTPRQALDYLYNLKKMAR.

618 to 625 is an ATP binding site; the sequence is GPNMGGKS.

This sequence belongs to the DNA mismatch repair MutS family.

Functionally, this protein is involved in the repair of mismatches in DNA. It is possible that it carries out the mismatch recognition step. This protein has a weak ATPase activity. This chain is DNA mismatch repair protein MutS, found in Shewanella piezotolerans (strain WP3 / JCM 13877).